Consider the following 198-residue polypeptide: Recombination protein RecR (198 aa).

A C4-type zinc finger spans residues 57–72 (CSVCGHITDQDPCYIC). The region spanning 80–175 (SVICVVQDPK…KLSRIAHGLP (96 aa)) is the Toprim domain.

It belongs to the RecR family.

May play a role in DNA repair. It seems to be involved in an RecBC-independent recombinational process of DNA repair. It may act with RecF and RecO. This is Recombination protein RecR from Bacillus pumilus (strain SAFR-032).